The following is a 1495-amino-acid chain: ABC transporter C family member 12 (1495 aa).

11 helical membrane passes run 38 to 58, 76 to 96, 110 to 130, 146 to 166, 173 to 195, 303 to 323, 337 to 357, 420 to 440, 441 to 461, 528 to 548, and 558 to 578; these read VMLV…WIIF, VLGL…VMGI, FEVA…VLIG, FGVL…LPLK, ALYL…LIYI, FWLA…GPVI, AWVG…GVLC, GLWS…QQLG, VASL…TLII, FILN…FVLL, and FTSL…PNLL. Residues 303–583 enclose the ABC transmembrane type-1 1 domain; the sequence is FWLAGIFKIG…LPNLLSQVVN (281 aa). An ABC transporter 1 domain is found at 615 to 839; sequence ISIKNGYFSW…GILFKKLMEN (225 aa). Residue 650-657 coordinates ATP; that stretch reads GGTGEGKT. 5 helical membrane passes run 907-927, 949-969, 1042-1062, 1140-1160, and 1166-1186; these read AVGG…TEVL, PGFY…VTFT, FALI…LLIL, LETL…LQNG, and AGFA…TSLL. The ABC transmembrane type-1 2 domain maps to 914 to 1198; the sequence is VMILLACYLA…VLRQASRAEN (285 aa). The ABC transporter 2 domain maps to 1235 to 1469; the sequence is IKFEDVHLRY…DTSAFFRMVH (235 aa). Residue 1269 to 1276 participates in ATP binding; sequence GRTGAGKS.

This sequence belongs to the ABC transporter superfamily. ABCC family. Conjugate transporter (TC 3.A.1.208) subfamily. As to expression, ubiquitous.

Its subcellular location is the membrane. It carries out the reaction ATP + H2O + xenobioticSide 1 = ADP + phosphate + xenobioticSide 2.. Its function is as follows. Pump for glutathione S-conjugates. The protein is ABC transporter C family member 12 (ABCC12) of Arabidopsis thaliana (Mouse-ear cress).